A 206-amino-acid polypeptide reads, in one-letter code: ATP-dependent Clp protease proteolytic subunit (206 aa).

Ser-108 serves as the catalytic Nucleophile. His-133 is a catalytic residue.

The protein belongs to the peptidase S14 family. Fourteen ClpP subunits assemble into 2 heptameric rings which stack back to back to give a disk-like structure with a central cavity, resembling the structure of eukaryotic proteasomes.

The protein resides in the cytoplasm. The enzyme catalyses Hydrolysis of proteins to small peptides in the presence of ATP and magnesium. alpha-casein is the usual test substrate. In the absence of ATP, only oligopeptides shorter than five residues are hydrolyzed (such as succinyl-Leu-Tyr-|-NHMec, and Leu-Tyr-Leu-|-Tyr-Trp, in which cleavage of the -Tyr-|-Leu- and -Tyr-|-Trp bonds also occurs).. In terms of biological role, cleaves peptides in various proteins in a process that requires ATP hydrolysis. Has a chymotrypsin-like activity. Plays a major role in the degradation of misfolded proteins. This chain is ATP-dependent Clp protease proteolytic subunit, found in Chromohalobacter salexigens (strain ATCC BAA-138 / DSM 3043 / CIP 106854 / NCIMB 13768 / 1H11).